The following is a 122-amino-acid chain: Small ribosomal subunit protein uS13 (122 aa).

The interval 94–122 (KQLPVRGQRTHTNARTRKGKAKPIAGKKK) is disordered.

Belongs to the universal ribosomal protein uS13 family. In terms of assembly, part of the 30S ribosomal subunit. Forms a loose heterodimer with protein S19. Forms two bridges to the 50S subunit in the 70S ribosome.

Its function is as follows. Located at the top of the head of the 30S subunit, it contacts several helices of the 16S rRNA. In the 70S ribosome it contacts the 23S rRNA (bridge B1a) and protein L5 of the 50S subunit (bridge B1b), connecting the 2 subunits; these bridges are implicated in subunit movement. Contacts the tRNAs in the A and P-sites. The sequence is that of Small ribosomal subunit protein uS13 from Methylorubrum populi (strain ATCC BAA-705 / NCIMB 13946 / BJ001) (Methylobacterium populi).